Consider the following 230-residue polypeptide: Demethylmenaquinone methyltransferase (230 aa).

Residues threonine 57, aspartate 77, and 101 to 102 (DI) each bind S-adenosyl-L-methionine.

Belongs to the class I-like SAM-binding methyltransferase superfamily. MenG/UbiE family.

It catalyses the reaction a 2-demethylmenaquinol + S-adenosyl-L-methionine = a menaquinol + S-adenosyl-L-homocysteine + H(+). The protein operates within quinol/quinone metabolism; menaquinone biosynthesis; menaquinol from 1,4-dihydroxy-2-naphthoate: step 2/2. Its function is as follows. Methyltransferase required for the conversion of demethylmenaquinol (DMKH2) to menaquinol (MKH2). The sequence is that of Demethylmenaquinone methyltransferase from Chlamydia pneumoniae (Chlamydophila pneumoniae).